A 348-amino-acid chain; its full sequence is Large ribosomal subunit protein uL3m (348 aa).

The transit peptide at Met1–Ser40 directs the protein to the mitochondrion.

The protein belongs to the universal ribosomal protein uL3 family. As to quaternary structure, component of the mitochondrial ribosome large subunit (39S) which comprises a 16S rRNA and about 50 distinct proteins.

It is found in the mitochondrion. The protein is Large ribosomal subunit protein uL3m (MRPL3) of Bos taurus (Bovine).